Consider the following 91-residue polypeptide: Aspartyl/glutamyl-tRNA(Asn/Gln) amidotransferase subunit C (91 aa).

The interval 68 to 91 is disordered; sequence LDQDDALANAPETEDGRFKGPNVS.

Belongs to the GatC family. In terms of assembly, heterotrimer of A, B and C subunits.

The catalysed reaction is L-glutamyl-tRNA(Gln) + L-glutamine + ATP + H2O = L-glutaminyl-tRNA(Gln) + L-glutamate + ADP + phosphate + H(+). It catalyses the reaction L-aspartyl-tRNA(Asn) + L-glutamine + ATP + H2O = L-asparaginyl-tRNA(Asn) + L-glutamate + ADP + phosphate + 2 H(+). Functionally, allows the formation of correctly charged Asn-tRNA(Asn) or Gln-tRNA(Gln) through the transamidation of misacylated Asp-tRNA(Asn) or Glu-tRNA(Gln) in organisms which lack either or both of asparaginyl-tRNA or glutaminyl-tRNA synthetases. The reaction takes place in the presence of glutamine and ATP through an activated phospho-Asp-tRNA(Asn) or phospho-Glu-tRNA(Gln). The sequence is that of Aspartyl/glutamyl-tRNA(Asn/Gln) amidotransferase subunit C from Halobacterium salinarum (strain ATCC 29341 / DSM 671 / R1).